Reading from the N-terminus, the 126-residue chain is Aspartate 1-decarboxylase (126 aa).

Serine 25 serves as the catalytic Schiff-base intermediate with substrate; via pyruvic acid. Serine 25 bears the Pyruvic acid (Ser) mark. Substrate is bound at residue threonine 57. The active-site Proton donor is the tyrosine 58. 73–75 (GGA) is a binding site for substrate.

This sequence belongs to the PanD family. In terms of assembly, heterooctamer of four alpha and four beta subunits. Pyruvate is required as a cofactor. In terms of processing, is synthesized initially as an inactive proenzyme, which is activated by self-cleavage at a specific serine bond to produce a beta-subunit with a hydroxyl group at its C-terminus and an alpha-subunit with a pyruvoyl group at its N-terminus.

It localises to the cytoplasm. It catalyses the reaction L-aspartate + H(+) = beta-alanine + CO2. It participates in cofactor biosynthesis; (R)-pantothenate biosynthesis; beta-alanine from L-aspartate: step 1/1. Catalyzes the pyruvoyl-dependent decarboxylation of aspartate to produce beta-alanine. This Stenotrophomonas maltophilia (strain R551-3) protein is Aspartate 1-decarboxylase.